We begin with the raw amino-acid sequence, 118 residues long: Holo-[acyl-carrier-protein] synthase (118 aa).

Mg(2+) contacts are provided by Asp-8 and Glu-58.

Belongs to the P-Pant transferase superfamily. AcpS family. Mg(2+) serves as cofactor.

It is found in the cytoplasm. It catalyses the reaction apo-[ACP] + CoA = holo-[ACP] + adenosine 3',5'-bisphosphate + H(+). In terms of biological role, transfers the 4'-phosphopantetheine moiety from coenzyme A to a Ser of acyl-carrier-protein. The protein is Holo-[acyl-carrier-protein] synthase of Streptococcus equi subsp. zooepidemicus (strain MGCS10565).